The chain runs to 71 residues: V-type proton ATPase subunit e (71 aa).

The Lumenal portion of the chain corresponds to 1 to 2 (MS). Residues 3 to 23 (FFHVVFVAFVIAAIGAAGWFV) traverse the membrane as a helical segment. Topologically, residues 24–35 (TPKGKNQTLLRT) are cytoplasmic. A helical transmembrane segment spans residues 36-56 (SLLLTLTCCYLMWAITYLCQL). The Lumenal segment spans residues 57 to 71 (HPLITPRRSDLRMEY).

It belongs to the V-ATPase e1/e2 subunit family. As to quaternary structure, V-ATPase is a heteromultimeric enzyme composed of a peripheral catalytic V1 complex (components A to H) attached to an integral membrane V0 proton pore complex (components: a, c, c', c'', d, e, f and VOA1).

The protein resides in the vacuole membrane. Subunit of the V0 complex of vacuolar(H+)-ATPase (V-ATPase), a multisubunit enzyme composed of a peripheral complex (V1) that hydrolyzes ATP and a membrane integral complex (V0) that translocates protons. V-ATPase is responsible for acidifying and maintaining the pH of intracellular compartments. The protein is V-type proton ATPase subunit e (VMA9) of Cryptococcus neoformans var. neoformans serotype D (strain JEC21 / ATCC MYA-565) (Filobasidiella neoformans).